A 793-amino-acid chain; its full sequence is Short transient receptor potential channel 1 (793 aa).

The interval methionine 1–glutamate 30 is disordered. Over methionine 1 to lysine 345 the chain is Cytoplasmic. The segment covering serine 15 to proline 28 has biased composition (low complexity). 4 ANK repeats span residues leucine 46–leucine 75, leucine 83–glutamine 109, alanine 111–threonine 156, and methionine 158–lysine 180. Zn(2+) is bound by residues histidine 189, cysteine 193, cysteine 195, and cysteine 198. The discontinuously helical intramembrane region spans proline 346 to isoleucine 379. Residues isoleucine 380–lysine 386 lie on the Cytoplasmic side of the membrane. A helical membrane pass occupies residues phenylalanine 387 to tyrosine 404. Residues serine 405 to arginine 422 are Extracellular-facing. A helical transmembrane segment spans residues isoleucine 423–isoleucine 439. Residues lysine 440–arginine 455 are Cytoplasmic-facing. The helical transmembrane segment at asparagine 456–valine 475 threads the bilayer. The Extracellular portion of the chain corresponds to alanine 476 to leucine 496. Residues valine 497–tyrosine 517 traverse the membrane as a helical segment. At threonine 518 to aspartate 536 the chain is on the cytoplasmic side. Residues phenylalanine 537–leucine 558 form a helical membrane-spanning segment. The Extracellular portion of the chain corresponds to tyrosine 559 to alanine 623. Residues cysteine 571 and cysteine 576 are joined by a disulfide bond. The chain crosses the membrane as a helical span at residues valine 624–methionine 644. Residues leucine 645 to asparagine 793 are Cytoplasmic-facing.

Belongs to the transient receptor (TC 1.A.4) family. STrpC subfamily. TRPC1 sub-subfamily. As to quaternary structure, heterotetramer with TRPC4 and/or TRPC5. Forms a heteromeric ion channel with TRPC4, with a 1:3 TRPC1:TRPC4 stoichiometry. Unlike other TRP channel proteins, does not form a homomeric channel. Interacts with TRPC4AP. Interacts with ITPR3. Interacts with MX1 and RNF24. Interacts with FKBP4. Interacts with PLSCR1. Interacts with PKD2L2. Forms a heterotetramer with PKD2 with a 2:2 stoichiometry; has distinct channel properties separate from PKD2 or TRPC1 homomers alone. Interacts with isoform 2 of TRPC3. Activation of PRKCA induces phosphorylation of TRPC1 and subsequent Ca2+ entry into cells. As to expression, seems to be ubiquitous.

It localises to the cell membrane. It carries out the reaction Ca(2+)(in) = Ca(2+)(out). The enzyme catalyses Na(+)(in) = Na(+)(out). The catalysed reaction is Li(+)(in) = Li(+)(out). It catalyses the reaction Cs(+)(in) = Cs(+)(out). With respect to regulation, may be operated by a phosphatidylinositol second messenger system activated by receptor tyrosine kinases or G-protein coupled receptors. Also activated by intracellular calcium store depletion. Inhibited by xanthine-based inhibitor Pico145. Its function is as follows. Forms a receptor-activated non-selective calcium permeant cation channel. Forms a heteromeric ion channel with TRPC4 or TRPC5 that has reduced calcium permeability compared to the homomeric TRPC4 or TRPC5 channel. Also permeable to monovalent ions including sodium, lithium and cesium ions. Forms a receptor-activated non-selective calcium permeant cation channel. Also activated by intracellular calcium store depletion. In Homo sapiens (Human), this protein is Short transient receptor potential channel 1 (TRPC1).